The primary structure comprises 239 residues: Transcriptional activatory protein AadR (239 aa).

27–149 lines the a nucleoside 3',5'-cyclic phosphate pocket; it reads ICGELGPADH…FATRELSLAQ (123 aa). Residues 158–231 enclose the HTH crp-type domain; that stretch reads RSAEEKVAAF…PDGVRVLDPK (74 aa). The segment at residues 191 to 210 is a DNA-binding region (H-T-H motif); sequence RQDIADFLGLTIETVSRTFT.

Its function is as follows. Transcriptional activator of anaerobic gene expression. For aromatic acid degradation. Also required for the anaerobic degradation of benzoate. This Rhodopseudomonas palustris (strain ATCC BAA-98 / CGA009) protein is Transcriptional activatory protein AadR (aadR).